The chain runs to 338 residues: Tripartite motif-containing protein 44 (338 aa).

Disordered regions lie at residues 1 to 25 (MASG…EPDE) and 72 to 162 (ARGD…EFDP). Over residues 95 to 162 (EAGEGIESEE…ETEAESEFDP (68 aa)) the composition is skewed to acidic residues. Residues 109–153 (EEESETEEESEDESEEDSEEEMEDEQESEAEEDNQEEGESEAEGE) adopt a coiled-coil conformation. The B box-type zinc finger occupies 171 to 212 (VAKRKCPDHGLDLSTYCQEDKQLICVLCPVIGAHHGHHLSTL). Positions 176, 179, 198, and 204 each coordinate Zn(2+). Residues 257–322 (QQEFKKVQKV…QLDTSNESAE (66 aa)) are a coiled coil. Residues 307-338 (MAQAKEQLDTSNESAEPKAEGDEEEPGGTDED) are disordered. Residues 327–338 (GDEEEPGGTDED) are compositionally biased toward acidic residues.

Interacts (via coiled coil) with TRIM17 (via coiled coil).

Its function is as follows. May play a role in the process of differentiation and maturation of neuronal cells. May regulate the activity of TRIM17. Is a negative regulator of PAX6 expression. The polypeptide is Tripartite motif-containing protein 44 (TRIM44) (Bos taurus (Bovine)).